A 26-amino-acid polypeptide reads, in one-letter code: Conotoxin Eb6.15 (26 aa).

Cystine bridges form between Cys-7–Cys-18 and Cys-13–Cys-25.

Belongs to the conotoxin O1 superfamily. As to expression, expressed by the venom duct.

The protein resides in the secreted. In Conus ebraeus (Hebrew cone), this protein is Conotoxin Eb6.15 (E1).